The primary structure comprises 234 residues: 3-dehydroquinate dehydratase (234 aa).

Residues 33–35 (EWR) and Arg68 each bind 3-dehydroquinate. His124 functions as the Proton donor/acceptor in the catalytic mechanism. Lys151 serves as the catalytic Schiff-base intermediate with substrate. 3-dehydroquinate contacts are provided by Arg193, Ser214, and Gln218.

It belongs to the type-I 3-dehydroquinase family. In terms of assembly, homodimer.

It catalyses the reaction 3-dehydroquinate = 3-dehydroshikimate + H2O. It participates in metabolic intermediate biosynthesis; chorismate biosynthesis; chorismate from D-erythrose 4-phosphate and phosphoenolpyruvate: step 3/7. Its function is as follows. Involved in the third step of the chorismate pathway, which leads to the biosynthesis of aromatic amino acids. Catalyzes the cis-dehydration of 3-dehydroquinate (DHQ) and introduces the first double bond of the aromatic ring to yield 3-dehydroshikimate. In Syntrophobacter fumaroxidans (strain DSM 10017 / MPOB), this protein is 3-dehydroquinate dehydratase.